Consider the following 341-residue polypeptide: Inositol 2-dehydrogenase (341 aa).

Belongs to the Gfo/Idh/MocA family. Homotetramer.

The catalysed reaction is myo-inositol + NAD(+) = scyllo-inosose + NADH + H(+). Its function is as follows. Involved in the oxidation of myo-inositol (MI) to 2-keto-myo-inositol (2KMI or 2-inosose). The polypeptide is Inositol 2-dehydrogenase (Acidothermus cellulolyticus (strain ATCC 43068 / DSM 8971 / 11B)).